The sequence spans 202 residues: Complement component C8 gamma chain (202 aa).

A signal peptide spans 1-20 (MLPPGTATLLTLLLAAGSLG). Pyrrolidone carboxylic acid is present on glutamine 21. Cysteines 96 and 188 form a disulfide.

This sequence belongs to the calycin superfamily. Lipocalin family. As to quaternary structure, heterotrimer of 3 chains: alpha (C8A), beta (C8B) and gamma (C8G); the alpha and gamma chains are disulfide bonded. Component of the membrane attack complex (MAC), composed of complement C5b, C6, C7, C8A, C8B, C8G and multiple copies of the pore-forming subunit C9.

The protein resides in the secreted. Its subcellular location is the target cell membrane. With respect to regulation, membrane attack complex (MAC) assembly is inhibited by CD59, thereby protecting self-cells from damage during complement activation. MAC assembly is also inhibited by clusterin (CLU) chaperones that inhibit polymerization of C9. Functionally, component of the membrane attack complex (MAC), a multiprotein complex activated by the complement cascade, which inserts into a target cell membrane and forms a pore, leading to target cell membrane rupture and cell lysis. The MAC is initiated by proteolytic cleavage of C5 into complement C5b in response to the classical, alternative, lectin and GZMK complement pathways. The complement pathways consist in a cascade of proteins that leads to phagocytosis and breakdown of pathogens and signaling that strengthens the adaptive immune system. C8G, together with C8A and C8B, inserts into the target membrane, but does not form pores by itself. During MAC assembly, associates with C5b, C6 and C7 to form the C5b8 intermediate complex that inserts into the target membrane and traverses the bilayer increasing membrane rigidity. The sequence is that of Complement component C8 gamma chain from Homo sapiens (Human).